The following is a 218-amino-acid chain: Cytidylate kinase (218 aa).

An ATP-binding site is contributed by 7–15 (GPSASGKSS).

This sequence belongs to the cytidylate kinase family. Type 1 subfamily.

The protein localises to the cytoplasm. The catalysed reaction is CMP + ATP = CDP + ADP. It carries out the reaction dCMP + ATP = dCDP + ADP. The sequence is that of Cytidylate kinase from Borrelia duttonii (strain Ly).